Here is a 117-residue protein sequence, read N- to C-terminus: Ig heavy chain V region MOPC 104E (117 aa).

In terms of domain architecture, Ig-like spans 1–116; the sequence is EVQLQQSGPE…WGAGTTVTVS (116 aa). A disulfide bond links C22 and C96. N-linked (GlcNAc...) (high mannose) asparagine; atypical glycosylation occurs at N55.

This chain is Ig heavy chain V region MOPC 104E, found in Mus musculus (Mouse).